A 449-amino-acid polypeptide reads, in one-letter code: Phosphoglucosamine mutase (449 aa).

The active-site Phosphoserine intermediate is Ser-101. Mg(2+)-binding residues include Ser-101, Asp-240, Asp-242, and Asp-244. Ser-101 is modified (phosphoserine).

The protein belongs to the phosphohexose mutase family. It depends on Mg(2+) as a cofactor. Post-translationally, activated by phosphorylation.

It carries out the reaction alpha-D-glucosamine 1-phosphate = D-glucosamine 6-phosphate. Catalyzes the conversion of glucosamine-6-phosphate to glucosamine-1-phosphate. The protein is Phosphoglucosamine mutase of Streptococcus suis (strain 98HAH33).